The following is a 365-amino-acid chain: DNA replication and repair protein RecF (365 aa).

An ATP-binding site is contributed by 30–37 (GENGQGKT).

It belongs to the RecF family.

The protein localises to the cytoplasm. The RecF protein is involved in DNA metabolism; it is required for DNA replication and normal SOS inducibility. RecF binds preferentially to single-stranded, linear DNA. It also seems to bind ATP. This chain is DNA replication and repair protein RecF, found in Desulfitobacterium hafniense (strain DSM 10664 / DCB-2).